The primary structure comprises 292 residues: Putative xanthine dehydrogenase FAD-binding subunit XdhB (292 aa).

The FAD-binding PCMH-type domain maps to methionine 1–lysine 176. FAD is bound by residues lysine 27–aspartate 34, alanine 109–glycine 113, isoleucine 165, and phenylalanine 184.

In terms of assembly, heterotrimer of XdhA, XdhB and XdhC. Requires FAD as cofactor.

The catalysed reaction is xanthine + NAD(+) + H2O = urate + NADH + H(+). The enzyme catalyses hypoxanthine + NAD(+) + H2O = xanthine + NADH + H(+). Its pathway is purine metabolism; hypoxanthine degradation; urate from hypoxanthine: step 1/2. It participates in purine metabolism; hypoxanthine degradation; urate from hypoxanthine: step 2/2. In terms of biological role, presumed to be a dehydrogenase, but possibly an oxidase. Participates in limited purine salvage (requires aspartate) but does not support aerobic growth on purines as the sole carbon source (purine catabolism). The sequence is that of Putative xanthine dehydrogenase FAD-binding subunit XdhB (xdhB) from Escherichia coli (strain K12).